Here is a 255-residue protein sequence, read N- to C-terminus: Small ribosomal subunit protein eS1 (255 aa).

Residues 1–18 are compositionally biased toward basic residues; the sequence is MAVGKNKRLSKGKKGLKK. Residues 1–22 are disordered; that stretch reads MAVGKNKRLSKGKKGLKKRAQD. An N-acetylalanine; partial modification is found at alanine 2.

Belongs to the eukaryotic ribosomal protein eS1 family. Component of the small ribosomal subunit. Mature ribosomes consist of a small (40S) and a large (60S) subunit. The 40S subunit contains about 33 different proteins and 1 molecule of RNA (18S). The 60S subunit contains about 49 different proteins and 3 molecules of RNA (25S, 5.8S and 5S).

The protein resides in the cytoplasm. This Uncinocarpus reesii (strain UAMH 1704) protein is Small ribosomal subunit protein eS1.